The primary structure comprises 664 residues: Translation factor guf1, mitochondrial (664 aa).

The N-terminal 43 residues, 1 to 43 (MRGCLQLARWLSAGPKCPAASLPKAPSGLYNTIRSFTSSAQLA), are a transit peptide targeting the mitochondrion. The 181-residue stretch at 66–246 (DRYRNFCIVA…TVVEKIPAPV (181 aa)) folds into the tr-type G domain. GTP-binding positions include 75–82 (AHVDHGKS), 139–143 (DTPGH), and 193–196 (NKVD).

This sequence belongs to the TRAFAC class translation factor GTPase superfamily. Classic translation factor GTPase family. LepA subfamily.

It localises to the mitochondrion inner membrane. It carries out the reaction GTP + H2O = GDP + phosphate + H(+). Promotes mitochondrial protein synthesis. May act as a fidelity factor of the translation reaction, by catalyzing a one-codon backward translocation of tRNAs on improperly translocated ribosomes. Binds to mitochondrial ribosomes in a GTP-dependent manner. The sequence is that of Translation factor guf1, mitochondrial (guf1) from Aspergillus oryzae (strain ATCC 42149 / RIB 40) (Yellow koji mold).